Consider the following 67-residue polypeptide: uncharacterized protein (67 aa).

2 helical membrane-spanning segments follow: residues 10-30 (EFFIYIFLFIDKTNVESITMW) and 40-60 (LMVGVWIVILFLTWFLLWMVF).

It belongs to the plectrovirus ORF10 family.

Its subcellular location is the host membrane. This is an uncharacterized protein from Spiroplasma citri (SpV1).